A 500-amino-acid polypeptide reads, in one-letter code: Probable cytosol aminopeptidase (500 aa).

Mn(2+) is bound by residues lysine 262 and aspartate 267. The active site involves lysine 274. Mn(2+)-binding residues include aspartate 285, aspartate 344, and glutamate 346. The active site involves arginine 348.

The protein belongs to the peptidase M17 family. It depends on Mn(2+) as a cofactor.

It localises to the cytoplasm. The enzyme catalyses Release of an N-terminal amino acid, Xaa-|-Yaa-, in which Xaa is preferably Leu, but may be other amino acids including Pro although not Arg or Lys, and Yaa may be Pro. Amino acid amides and methyl esters are also readily hydrolyzed, but rates on arylamides are exceedingly low.. It carries out the reaction Release of an N-terminal amino acid, preferentially leucine, but not glutamic or aspartic acids.. Presumably involved in the processing and regular turnover of intracellular proteins. Catalyzes the removal of unsubstituted N-terminal amino acids from various peptides. This Ehrlichia ruminantium (strain Welgevonden) protein is Probable cytosol aminopeptidase.